A 263-amino-acid chain; its full sequence is Hydroxyethylthiazole kinase 1 (263 aa).

Met-42 lines the substrate pocket. ATP-binding residues include Lys-118 and Thr-164. Gly-191 provides a ligand contact to substrate.

Belongs to the Thz kinase family. Mg(2+) is required as a cofactor.

The enzyme catalyses 5-(2-hydroxyethyl)-4-methylthiazole + ATP = 4-methyl-5-(2-phosphooxyethyl)-thiazole + ADP + H(+). The protein operates within cofactor biosynthesis; thiamine diphosphate biosynthesis; 4-methyl-5-(2-phosphoethyl)-thiazole from 5-(2-hydroxyethyl)-4-methylthiazole: step 1/1. Functionally, catalyzes the phosphorylation of the hydroxyl group of 4-methyl-5-beta-hydroxyethylthiazole (THZ). The polypeptide is Hydroxyethylthiazole kinase 1 (Clostridium botulinum (strain Kyoto / Type A2)).